We begin with the raw amino-acid sequence, 487 residues long: Siroheme synthase (487 aa).

The precorrin-2 dehydrogenase /sirohydrochlorin ferrochelatase stretch occupies residues 1-203 (MNTFPLFFKL…GRSVEAEQAL (203 aa)). Residues 22-23 (EV) and 43-44 (PQ) each bind NAD(+). Ser128 is modified (phosphoserine). Positions 229–487 (GEVYIVGAGP…DQQAHALNML (259 aa)) are uroporphyrinogen-III C-methyltransferase. Pro238 contacts S-adenosyl-L-methionine. The Proton acceptor role is filled by Asp261. Lys283 serves as the catalytic Proton donor. S-adenosyl-L-methionine contacts are provided by residues 314 to 316 (GGD), Val319, 344 to 345 (TA), Met396, and Ala425.

This sequence in the N-terminal section; belongs to the precorrin-2 dehydrogenase / sirohydrochlorin ferrochelatase family. The protein in the C-terminal section; belongs to the precorrin methyltransferase family.

It carries out the reaction uroporphyrinogen III + 2 S-adenosyl-L-methionine = precorrin-2 + 2 S-adenosyl-L-homocysteine + H(+). The enzyme catalyses precorrin-2 + NAD(+) = sirohydrochlorin + NADH + 2 H(+). The catalysed reaction is siroheme + 2 H(+) = sirohydrochlorin + Fe(2+). Its pathway is cofactor biosynthesis; adenosylcobalamin biosynthesis; precorrin-2 from uroporphyrinogen III: step 1/1. It participates in cofactor biosynthesis; adenosylcobalamin biosynthesis; sirohydrochlorin from precorrin-2: step 1/1. The protein operates within porphyrin-containing compound metabolism; siroheme biosynthesis; precorrin-2 from uroporphyrinogen III: step 1/1. It functions in the pathway porphyrin-containing compound metabolism; siroheme biosynthesis; siroheme from sirohydrochlorin: step 1/1. Its pathway is porphyrin-containing compound metabolism; siroheme biosynthesis; sirohydrochlorin from precorrin-2: step 1/1. Functionally, multifunctional enzyme that catalyzes the SAM-dependent methylations of uroporphyrinogen III at position C-2 and C-7 to form precorrin-2 via precorrin-1. Then it catalyzes the NAD-dependent ring dehydrogenation of precorrin-2 to yield sirohydrochlorin. Finally, it catalyzes the ferrochelation of sirohydrochlorin to yield siroheme. The chain is Siroheme synthase from Psychrobacter sp. (strain PRwf-1).